The chain runs to 260 residues: NH(3)-dependent NAD(+) synthetase (260 aa).

Residue 31 to 38 (GLSGGLDS) coordinates ATP. Asp-37 contributes to the Mg(2+) binding site. Arg-112 lines the deamido-NAD(+) pocket. Thr-132 is a binding site for ATP. Glu-137 contributes to the Mg(2+) binding site. Positions 161 and 183 each coordinate ATP.

The protein belongs to the NAD synthetase family. As to quaternary structure, homodimer.

It catalyses the reaction deamido-NAD(+) + NH4(+) + ATP = AMP + diphosphate + NAD(+) + H(+). It participates in cofactor biosynthesis; NAD(+) biosynthesis; NAD(+) from deamido-NAD(+) (ammonia route): step 1/1. Functionally, catalyzes the ATP-dependent amidation of deamido-NAD to form NAD. Uses ammonia as a nitrogen source. This is NH(3)-dependent NAD(+) synthetase from Helicobacter pylori (strain HPAG1).